The chain runs to 203 residues: uncharacterized protein (203 aa).

This is an uncharacterized protein from Archaeoglobus fulgidus (strain ATCC 49558 / DSM 4304 / JCM 9628 / NBRC 100126 / VC-16).